The sequence spans 1148 residues: Phospholipid-transporting ATPase IB (1148 aa).

At 1 to 44 the chain is on the cytoplasmic side; the sequence is MSRATSVGDQLEAPARIIYLNQSHLNKFCDNRISTAKYSVLTFL. Residue threonine 5 is modified to Phosphothreonine. The chain crosses the membrane as a helical span at residues 45–66; that stretch reads PRFLYEQIRRAANAFFLFIALL. Topologically, residues 67-71 are exoplasmic loop; it reads QQIPD. A helical membrane pass occupies residues 72 to 94; it reads VSPTGRYTTLVPLVIILTIAGIK. The Cytoplasmic segment spans residues 95-276; it reads EIIEDFKRHK…SNVEKVTNVQ (182 aa). A helical transmembrane segment spans residues 277 to 298; the sequence is ILVLFGILLVMALVSSVGALFW. Over 299–323 the chain is Exoplasmic loop; it reads NGSHGGKSWYIKKMDTNSDNFGYNL. A helical membrane pass occupies residues 324-345; that stretch reads LTFIILYNNLIPISLLVTLEVV. Residues 346-837 are Cytoplasmic-facing; that stretch reads KYTQALFINW…GAWSYNRVTK (492 aa). Catalysis depends on aspartate 388, which acts as the 4-aspartylphosphate intermediate. ATP-binding residues include aspartate 388, lysine 389, threonine 390, glutamate 488, phenylalanine 529, lysine 552, arginine 585, threonine 665, glycine 666, aspartate 667, arginine 755, and lysine 761. A Mg(2+)-binding site is contributed by aspartate 388. Threonine 390 is a binding site for Mg(2+). Aspartate 781 contributes to the Mg(2+) binding site. ATP contacts are provided by asparagine 784 and aspartate 785. Aspartate 785 is a Mg(2+) binding site. The chain crosses the membrane as a helical span at residues 838 to 858; that stretch reads CILYCFYKNVVLYIIELWFAF. Over 859–870 the chain is Exoplasmic loop; it reads VNGFSGQILFER. A helical membrane pass occupies residues 871-890; it reads WCIGLYNVIFTALPPFTLGI. Topologically, residues 891–920 are cytoplasmic; it reads FERSCTQESMLRFPQLYRITQNAEGFNTKV. Residues 921 to 942 traverse the membrane as a helical segment; the sequence is FWGHCINALVHSLILFWVPMKA. At 943-956 the chain is on the exoplasmic loop side; sequence LEHDTPVTSGHATD. The helical transmembrane segment at 957–979 threads the bilayer; it reads YLFVGNIVYTYVVVTVCLKAGLE. Topologically, residues 980–985 are cytoplasmic; the sequence is TTAWTK. The helical transmembrane segment at 986-1006 threads the bilayer; sequence FSHLAVWGSMLIWLVFFGVYS. Residues 1007–1024 are Exoplasmic loop-facing; the sequence is TIWPTIPIAPDMKGQATM. A helical membrane pass occupies residues 1025 to 1049; sequence VLSSAYFWLGLFLVPTACLIEDVAW. Topologically, residues 1050–1148 are cytoplasmic; that stretch reads RAAKHTCKKT…DTTKENSRKK (99 aa).

The protein belongs to the cation transport ATPase (P-type) (TC 3.A.3) family. Type IV subfamily. In terms of assembly, component of a P4-ATPase flippase complex which consists of a catalytic alpha subunit and an accessory beta subunit. Interacts with TMEM30A to form a flippase complex. The cofactor is Mg(2+). Found in testis, heart and brain. Most abundant in testis. Also detected in fetal tissues. Expressed in retinal photoreceptor cells; detected in retina outer nuclear layer and inner segment (at protein level).

The protein resides in the membrane. The protein localises to the golgi apparatus membrane. It is found in the endosome membrane. It localises to the cell membrane. Its subcellular location is the photoreceptor outer segment membrane. The protein resides in the photoreceptor inner segment membrane. It carries out the reaction ATP + H2O + phospholipidSide 1 = ADP + phosphate + phospholipidSide 2.. It catalyses the reaction a 1,2-diacyl-sn-glycero-3-phospho-L-serine(out) + ATP + H2O = a 1,2-diacyl-sn-glycero-3-phospho-L-serine(in) + ADP + phosphate + H(+). The catalysed reaction is a 1,2-diacyl-sn-glycero-3-phosphoethanolamine(in) + ATP + H2O = a 1,2-diacyl-sn-glycero-3-phosphoethanolamine(out) + ADP + phosphate + H(+). Functionally, catalytic component of a P4-ATPase flippase complex which catalyzes the hydrolysis of ATP coupled to the transport of aminophospholipids from the outer to the inner leaflet of various membranes and ensures the maintenance of asymmetric distribution of phospholipids. Able to translocate phosphatidylserine, but not phosphatidylcholine. Phospholipid translocation also seems to be implicated in vesicle formation and in uptake of lipid signaling molecules. Reconstituted to liposomes, the ATP8A2:TMEM30A flippase complex predominantly transports phosphatidylserine (PS) and to a lesser extent phosphatidylethanolamine (PE). Phospholipid translocation is not associated with a countertransport of an inorganic ion or other charged substrate from the cytoplasmic side toward the exoplasm in connection with the phosphorylation from ATP. ATP8A2:TMEM30A may be involved in regulation of neurite outgrowth. Proposed to function in the generation and maintenance of phospholipid asymmetry in photoreceptor disk membranes and neuronal axon membranes. May be involved in vesicle trafficking in neuronal cells. Required for normal visual and auditory function; involved in photoreceptor and inner ear spiral ganglion cell survival. This is Phospholipid-transporting ATPase IB from Mus musculus (Mouse).